The sequence spans 104 residues: uncharacterized protein (104 aa).

This sequence belongs to the BolA/IbaG family.

This is an uncharacterized protein from Buchnera aphidicola subsp. Acyrthosiphon pisum (strain APS) (Acyrthosiphon pisum symbiotic bacterium).